Reading from the N-terminus, the 294-residue chain is ATP synthase gamma chain (294 aa).

The protein belongs to the ATPase gamma chain family. In terms of assembly, F-type ATPases have 2 components, CF(1) - the catalytic core - and CF(0) - the membrane proton channel. CF(1) has five subunits: alpha(3), beta(3), gamma(1), delta(1), epsilon(1). CF(0) has three main subunits: a, b and c.

The protein localises to the cell inner membrane. Produces ATP from ADP in the presence of a proton gradient across the membrane. The gamma chain is believed to be important in regulating ATPase activity and the flow of protons through the CF(0) complex. The chain is ATP synthase gamma chain from Rhizorhabdus wittichii (strain DSM 6014 / CCUG 31198 / JCM 15750 / NBRC 105917 / EY 4224 / RW1) (Sphingomonas wittichii).